The sequence spans 71 residues: Small ribosomal subunit protein bS21 (71 aa).

This sequence belongs to the bacterial ribosomal protein bS21 family.

The polypeptide is Small ribosomal subunit protein bS21 (Ruthia magnifica subsp. Calyptogena magnifica).